Consider the following 555-residue polypeptide: Alpha-1,2-mannosyltransferase ALG9 (555 aa).

The Cytoplasmic segment spans residues 1–7 (MNCKAVT). Residues 8 to 28 (ISLLLLLFLTRVYIQPTFSLI) traverse the membrane as a helical segment. Residues 29 to 62 (SDCDETFNYWEPLNLLVRGFGKQTWEYSPEYSIR) are Lumenal-facing. The chain crosses the membrane as a helical span at residues 63 to 83 (SWAFLLPFYCILYPVNKFTDL). Topologically, residues 84–86 (ESH) are cytoplasmic. The chain crosses the membrane as a helical span at residues 87–107 (WNFFITRACLGFFSFIMEFKL). Residues 108–113 (HREIAG) are Lumenal-facing. The helical transmembrane segment at 114-134 (SLALQIANIWIIFQLFNPGWF) threads the bilayer. Over 135 to 176 (HASVELLPSAVAMLLYVGATRHSLRYLSTGSTSNFTKSLAYN) the chain is Cytoplasmic. Residues 177–197 (FLASILGWPFVLILSLPLCLH) form a helical membrane-spanning segment. The Lumenal portion of the chain corresponds to 198-213 (YLFNHRIISTIRTAFD). The helical transmembrane segment at 214 to 234 (CCLIFSLTAFAVIVTDSIFYG) threads the bilayer. The Cytoplasmic portion of the chain corresponds to 235–268 (KLAPVSWNILFYNVINASEESGPNIFGVEPWYYY). A helical transmembrane segment spans residues 269–289 (PLNLLLNFPLPVLVLAILGIF). The Lumenal portion of the chain corresponds to 290–316 (HLRLWPLWASLFTWIAVFTQQPHKEER). The helical transmembrane segment at 317–337 (FLYPIYGLITLSASIAFYKVL) threads the bilayer. Topologically, residues 338–349 (NLFNRKPILKKG) are cytoplasmic. A helical membrane pass occupies residues 350-370 (IKLSVLLIVAGQAMSRIVALV). The Lumenal segment spans residues 371–555 (NNYTAPIAVY…LFEKPTETTN (185 aa)).

Belongs to the glycosyltransferase 22 family.

The protein resides in the endoplasmic reticulum membrane. The catalysed reaction is an alpha-D-Man-(1-&gt;2)-alpha-D-Man-(1-&gt;2)-alpha-D-Man-(1-&gt;3)-[alpha-D-Man-(1-&gt;3)-alpha-D-Man-(1-&gt;6)]-beta-D-Man-(1-&gt;4)-beta-D-GlcNAc-(1-&gt;4)-alpha-D-GlcNAc-diphospho-di-trans,poly-cis-dolichol + a di-trans,poly-cis-dolichyl beta-D-mannosyl phosphate = an alpha-D-Man-(1-&gt;2)-alpha-D-Man-(1-&gt;2)-alpha-D-Man-(1-&gt;3)-[alpha-D-Man-(1-&gt;2)-alpha-D-Man-(1-&gt;3)-alpha-D-Man-(1-&gt;6)]-beta-D-Man-(1-&gt;4)-beta-D-GlcNAc-(1-&gt;4)-alpha-D-GlcNAc-diphospho-di-trans,poly-cis-dolichol + a di-trans,poly-cis-dolichyl phosphate + H(+). It catalyses the reaction an alpha-D-Man-(1-&gt;2)-alpha-D-Man-(1-&gt;2)-alpha-D-Man-(1-&gt;3)-[alpha-D-Man-(1-&gt;2)-alpha-D-Man-(1-&gt;3)-[alpha-D-Man-(1-&gt;6)]-alpha-D-Man-(1-&gt;6)]-beta-D-Man-(1-&gt;4)-beta-D-GlcNAc-(1-&gt;4)-alpha-D-GlcNAc-diphospho-di-trans,poly-cis-dolichol + a di-trans,poly-cis-dolichyl beta-D-mannosyl phosphate = an alpha-D-Man-(1-&gt;2)-alpha-D-Man-(1-&gt;2)-alpha-D-Man-(1-&gt;3)-[alpha-D-Man-(1-&gt;2)-alpha-D-Man-(1-&gt;3)-[alpha-D-Man-(1-&gt;2)-alpha-D-Man-(1-&gt;6)]-alpha-D-Man-(1-&gt;6)]-beta-D-Man-(1-&gt;4)-beta-D-GlcNAc-(1-&gt;4)-alpha-D-GlcNAc-diphospho-di-trans,poly-cis-dolichol + a di-trans,poly-cis-dolichyl phosphate + H(+). The protein operates within protein modification; protein glycosylation. In terms of biological role, mannosyltransferase that operates in the biosynthetic pathway of dolichol-linked oligosaccharides, the glycan precursors employed in protein asparagine (N)-glycosylation. The assembly of dolichol-linked oligosaccharides begins on the cytosolic side of the endoplasmic reticulum membrane and finishes in its lumen. The sequential addition of sugars to dolichol pyrophosphate produces dolichol-linked oligosaccharides containing fourteen sugars, including two GlcNAcs, nine mannoses and three glucoses. Once assembled, the oligosaccharide is transferred from the lipid to nascent proteins by oligosaccharyltransferases. In the lumen of the endoplasmic reticulum, catalyzes the addition of the seventh and ninth alpha-1,2-linked mannose residues to Man(6)GlcNAc(2)-PP-dolichol and Man(8)GlcNAc(2)-PP-dolichol respectively. In Saccharomyces cerevisiae (strain ATCC 204508 / S288c) (Baker's yeast), this protein is Alpha-1,2-mannosyltransferase ALG9 (ALG9).